A 514-amino-acid chain; its full sequence is 2-isopropylmalate synthase (514 aa).

The Pyruvate carboxyltransferase domain maps to 5–268 (LIIFDTTLRD…DVGIDTSQIV (264 aa)). Residues D14, H202, H204, and N239 each contribute to the Mn(2+) site. The regulatory domain stretch occupies residues 395–514 (KFVSLSQHSE…KDDKVNPQRS (120 aa)).

This sequence belongs to the alpha-IPM synthase/homocitrate synthase family. LeuA type 1 subfamily. As to quaternary structure, homodimer. Mn(2+) is required as a cofactor.

Its subcellular location is the cytoplasm. It carries out the reaction 3-methyl-2-oxobutanoate + acetyl-CoA + H2O = (2S)-2-isopropylmalate + CoA + H(+). It participates in amino-acid biosynthesis; L-leucine biosynthesis; L-leucine from 3-methyl-2-oxobutanoate: step 1/4. Its function is as follows. Catalyzes the condensation of the acetyl group of acetyl-CoA with 3-methyl-2-oxobutanoate (2-ketoisovalerate) to form 3-carboxy-3-hydroxy-4-methylpentanoate (2-isopropylmalate). This chain is 2-isopropylmalate synthase, found in Burkholderia lata (strain ATCC 17760 / DSM 23089 / LMG 22485 / NCIMB 9086 / R18194 / 383).